Here is a 696-residue protein sequence, read N- to C-terminus: Tegument protein UL47 (696 aa).

Composition is skewed to basic residues over residues 1–15 (MSVR…RAST) and 70–81 (RRRREARGHPGS). 2 disordered regions span residues 1-39 (MSVR…GGVG) and 54-130 (SEVE…YLGP). The segment at 57–84 (EAAGEMASEEPPPRRRREARGHPGSRRA) is RNA-binding. A Nuclear localization signal motif is present at residues 70-84 (RRRREARGHPGSRRA). The segment covering 87 to 103 (ARAAAPPRRASFPRPRS) has biased composition (low complexity). The Nuclear export signal signature appears at 650-673 (SVLGPRVRVVDIMAQFRKLLMGDE).

This sequence belongs to the alphaherpesvirinae HHV-1 UL47 family. As to quaternary structure, interacts with US3 kinase. Interacts with UL31 and UL34; these interactions seem important for efficient virion nuclear egress. Interacts with UL41/VHS. Post-translationally, phosphorylated by US3. This phosphorylation is required for proper nuclear localization.

The protein resides in the virion tegument. Its subcellular location is the host nucleus. The protein localises to the host cytoplasm. Tegument protein that can bind to various RNA transcripts. Plays a role in the attenuation of selective viral and cellular mRNA degradation by modulating the activity of host shutoff RNase UL41/VHS. Also plays a role in the primary envelopment of virions in the perinuclear space, probably by interacting with two nuclear egress proteins UL31 and UL34. The protein is Tegument protein UL47 of Human herpesvirus 2 (strain HG52) (HHV-2).